A 69-amino-acid chain; its full sequence is UPF0150 protein ssr1258 (69 aa).

It belongs to the UPF0150 family.

In Synechocystis sp. (strain ATCC 27184 / PCC 6803 / Kazusa), this protein is UPF0150 protein ssr1258.